Here is a 237-residue protein sequence, read N- to C-terminus: Large ribosomal subunit protein uL2 (237 aa).

Residues 202–237 (FGGGNRKHPGKPTTVSRNAPPGRKVGHIAARRTGKR) form a disordered region. A compositionally biased stretch (basic residues) spans 225-237 (KVGHIAARRTGKR).

It belongs to the universal ribosomal protein uL2 family. In terms of assembly, part of the 50S ribosomal subunit. Forms a bridge to the 30S subunit in the 70S ribosome.

Functionally, one of the primary rRNA binding proteins. Required for association of the 30S and 50S subunits to form the 70S ribosome, for tRNA binding and peptide bond formation. It has been suggested to have peptidyltransferase activity; this is somewhat controversial. Makes several contacts with the 16S rRNA in the 70S ribosome. The polypeptide is Large ribosomal subunit protein uL2 (Methanococcoides burtonii (strain DSM 6242 / NBRC 107633 / OCM 468 / ACE-M)).